The primary structure comprises 242 residues: Eukaryotic translation initiation factor 4E type 1B (242 aa).

The disordered stretch occupies residues M1–L42. The span at W16 to A25 shows a compositional bias: acidic residues. Polar residues predominate over residues G32 to T41. An EIF4EBP1/2/3 binding region spans residues H62–Q65. W81–Q82 provides a ligand contact to mRNA. The EIF4EBP1/2/3 binding stretch occupies residues W98–S102. W127 to E128 serves as a coordination point for mRNA. Positions E157–G164 are EIF4EBP1/2/3 binding. Residues R182 to K187 and T230 to S232 contribute to the mRNA site.

It belongs to the eukaryotic initiation factor 4E family. As to quaternary structure, eIF4F is a multi-subunit complex, the composition of which varies with external and internal environmental conditions. It is composed of at least EIF4A, EIF4E and EIF4G.

In terms of biological role, recognizes and binds the 7-methylguanosine-containing mRNA cap during an early step in the initiation of protein synthesis and facilitates ribosome binding by inducing the unwinding of the mRNAs secondary structure. The chain is Eukaryotic translation initiation factor 4E type 1B (EIF4E1B) from Homo sapiens (Human).